A 398-amino-acid chain; its full sequence is Phosphoglycerate kinase (398 aa).

Residues Asp-23 to Asn-25, Arg-38, His-61 to Lys-64, Arg-122, and Arg-155 each bind substrate. ATP contacts are provided by residues Lys-206, Gly-297, Glu-328, and Gly-354–Ser-357.

The protein belongs to the phosphoglycerate kinase family. Monomer.

It localises to the cytoplasm. It catalyses the reaction (2R)-3-phosphoglycerate + ATP = (2R)-3-phospho-glyceroyl phosphate + ADP. It functions in the pathway carbohydrate degradation; glycolysis; pyruvate from D-glyceraldehyde 3-phosphate: step 2/5. This is Phosphoglycerate kinase from Clostridium botulinum (strain Hall / ATCC 3502 / NCTC 13319 / Type A).